A 119-amino-acid chain; its full sequence is Large ribosomal subunit protein uL18 (119 aa).

This sequence belongs to the universal ribosomal protein uL18 family. As to quaternary structure, part of the 50S ribosomal subunit; part of the 5S rRNA/L5/L18/L25 subcomplex. Contacts the 5S and 23S rRNAs.

This is one of the proteins that bind and probably mediate the attachment of the 5S RNA into the large ribosomal subunit, where it forms part of the central protuberance. The protein is Large ribosomal subunit protein uL18 of Mesorhizobium japonicum (strain LMG 29417 / CECT 9101 / MAFF 303099) (Mesorhizobium loti (strain MAFF 303099)).